The following is a 417-amino-acid chain: Putative competence-damage inducible protein (417 aa).

The protein belongs to the CinA family.

The sequence is that of Putative competence-damage inducible protein from Shouchella clausii (strain KSM-K16) (Alkalihalobacillus clausii).